We begin with the raw amino-acid sequence, 102 residues long: Large ribosomal subunit protein P1 (102 aa).

Residues 69-91 (APAAAAEEKKEEEKKEEKKEEDT) are disordered. Basic and acidic residues predominate over residues 74-90 (AEEKKEEEKKEEKKEED).

It belongs to the eukaryotic ribosomal protein P1/P2 family. In terms of assembly, part of the 50S ribosomal subunit. Homodimer, it forms part of the ribosomal stalk which helps the ribosome interact with GTP-bound translation factors. Forms a heptameric uL10/P0(P1)2(P1)2(P1)2 complex, where uL10/P0 forms an elongated spine to which the P1 dimers bind in a sequential fashion.

Its function is as follows. Forms part of the ribosomal stalk, playing a central role in the interaction of the ribosome with GTP-bound translation factors. The sequence is that of Large ribosomal subunit protein P1 from Methanocaldococcus jannaschii (strain ATCC 43067 / DSM 2661 / JAL-1 / JCM 10045 / NBRC 100440) (Methanococcus jannaschii).